A 379-amino-acid chain; its full sequence is Cytochrome b (379 aa).

A run of 4 helical transmembrane segments spans residues 34-54, 78-99, 114-134, and 179-199; these read FGSL…LLAM, WLIR…YFHI, WNTG…GYVL, and FFAL…IHLT. Heme b is bound by residues histidine 84 and histidine 98. Positions 183 and 197 each coordinate heme b. Position 202 (histidine 202) interacts with a ubiquinone. 4 helical membrane passes run 227–247, 289–309, 321–341, and 348–368; these read LKDI…TFFS, LGGV…PLLH, FSQV…WVGS, and FIAI…VLFP.

This sequence belongs to the cytochrome b family. The cytochrome bc1 complex contains 11 subunits: 3 respiratory subunits (MT-CYB, CYC1 and UQCRFS1), 2 core proteins (UQCRC1 and UQCRC2) and 6 low-molecular weight proteins (UQCRH/QCR6, UQCRB/QCR7, UQCRQ/QCR8, UQCR10/QCR9, UQCR11/QCR10 and a cleavage product of UQCRFS1). This cytochrome bc1 complex then forms a dimer. Heme b is required as a cofactor.

Its subcellular location is the mitochondrion inner membrane. Component of the ubiquinol-cytochrome c reductase complex (complex III or cytochrome b-c1 complex) that is part of the mitochondrial respiratory chain. The b-c1 complex mediates electron transfer from ubiquinol to cytochrome c. Contributes to the generation of a proton gradient across the mitochondrial membrane that is then used for ATP synthesis. This Apteryx australis (Southern brown kiwi) protein is Cytochrome b (MT-CYB).